Consider the following 232-residue polypeptide: Large ribosomal subunit protein uL1 (232 aa).

This sequence belongs to the universal ribosomal protein uL1 family. As to quaternary structure, part of the 50S ribosomal subunit.

Its function is as follows. Binds directly to 23S rRNA. The L1 stalk is quite mobile in the ribosome, and is involved in E site tRNA release. Protein L1 is also a translational repressor protein, it controls the translation of the L11 operon by binding to its mRNA. The chain is Large ribosomal subunit protein uL1 from Burkholderia cenocepacia (strain ATCC BAA-245 / DSM 16553 / LMG 16656 / NCTC 13227 / J2315 / CF5610) (Burkholderia cepacia (strain J2315)).